A 374-amino-acid chain; its full sequence is Peptide chain release factor 2 (374 aa).

An N5-methylglutamine modification is found at Gln252.

The protein belongs to the prokaryotic/mitochondrial release factor family. Post-translationally, methylated by PrmC. Methylation increases the termination efficiency of RF2.

The protein localises to the cytoplasm. Peptide chain release factor 2 directs the termination of translation in response to the peptide chain termination codons UGA and UAA. The polypeptide is Peptide chain release factor 2 (Stenotrophomonas maltophilia (strain R551-3)).